A 73-amino-acid chain; its full sequence is UPF0154 protein MYCGA5700 (73 aa).

A helical transmembrane segment spans residues 5–25 (LALGLSIPLCLIVGAFVGYFV).

This sequence belongs to the UPF0154 family.

It is found in the membrane. The chain is UPF0154 protein MYCGA5700 from Mycoplasmoides gallisepticum (strain R(low / passage 15 / clone 2)) (Mycoplasma gallisepticum).